The sequence spans 119 residues: Ribonuclease P protein component (119 aa).

The protein belongs to the RnpA family. In terms of assembly, consists of a catalytic RNA component (M1 or rnpB) and a protein subunit.

The catalysed reaction is Endonucleolytic cleavage of RNA, removing 5'-extranucleotides from tRNA precursor.. RNaseP catalyzes the removal of the 5'-leader sequence from pre-tRNA to produce the mature 5'-terminus. It can also cleave other RNA substrates such as 4.5S RNA. The protein component plays an auxiliary but essential role in vivo by binding to the 5'-leader sequence and broadening the substrate specificity of the ribozyme. The chain is Ribonuclease P protein component from Haemophilus influenzae (strain 86-028NP).